Consider the following 153-residue polypeptide: Large ribosomal subunit protein uL15 (153 aa).

Over residues 1-40 (MTDKKRRQRGSRTHGGGTHKNRRGAGNRGGRGRAGRKKHE) the composition is skewed to basic residues. A disordered region spans residues 1-60 (MTDKKRRQRGSRTHGGGTHKNRRGAGNRGGRGRAGRKKHEQHNYEDVGKSGFKRPEKTDR). A compositionally biased stretch (basic and acidic residues) spans 41–60 (QHNYEDVGKSGFKRPEKTDR).

Belongs to the universal ribosomal protein uL15 family. Part of the 50S ribosomal subunit.

In terms of biological role, binds to the 23S rRNA. The protein is Large ribosomal subunit protein uL15 of Halobacterium salinarum (strain ATCC 29341 / DSM 671 / R1).